We begin with the raw amino-acid sequence, 69 residues long: uncharacterized protein (69 aa).

Residues 23-46 (AENEGNRKENRRQMQSRNERGCNV) are disordered. Residues 26-44 (EGNRKENRRQMQSRNERGC) show a composition bias toward basic and acidic residues.

This is an uncharacterized protein from Homo sapiens (Human).